Consider the following 197-residue polypeptide: UPF0301 protein A2cp1_4106 (197 aa).

Belongs to the UPF0301 (AlgH) family.

In Anaeromyxobacter dehalogenans (strain 2CP-1 / ATCC BAA-258), this protein is UPF0301 protein A2cp1_4106.